A 214-amino-acid chain; its full sequence is Orotate phosphoribosyltransferase (214 aa).

Residue Lys-26 coordinates 5-phospho-alpha-D-ribose 1-diphosphate. Residue 34 to 35 coordinates orotate; the sequence is FF. 5-phospho-alpha-D-ribose 1-diphosphate-binding positions include 72 to 73, Arg-99, Lys-100, Lys-103, His-105, and 124 to 132; these read YK and DDVITAGTA. Residues Thr-128 and Arg-156 each contribute to the orotate site.

Belongs to the purine/pyrimidine phosphoribosyltransferase family. PyrE subfamily. As to quaternary structure, homodimer. It depends on Mg(2+) as a cofactor.

The enzyme catalyses orotidine 5'-phosphate + diphosphate = orotate + 5-phospho-alpha-D-ribose 1-diphosphate. Its pathway is pyrimidine metabolism; UMP biosynthesis via de novo pathway; UMP from orotate: step 1/2. Its function is as follows. Catalyzes the transfer of a ribosyl phosphate group from 5-phosphoribose 1-diphosphate to orotate, leading to the formation of orotidine monophosphate (OMP). This Pasteurella multocida (strain Pm70) protein is Orotate phosphoribosyltransferase.